We begin with the raw amino-acid sequence, 258 residues long: tRNA (guanine-N(7)-)-methyltransferase (258 aa).

S-adenosyl-L-methionine is bound by residues glycine 76, 99-100, 132-133, and leucine 152; these read EI and NA. Aspartate 155 is a catalytic residue. 230-232 lines the S-adenosyl-L-methionine pocket; the sequence is TEE.

This sequence belongs to the class I-like SAM-binding methyltransferase superfamily. TrmB family.

It localises to the nucleus. The catalysed reaction is guanosine(46) in tRNA + S-adenosyl-L-methionine = N(7)-methylguanosine(46) in tRNA + S-adenosyl-L-homocysteine. It functions in the pathway tRNA modification; N(7)-methylguanine-tRNA biosynthesis. Functionally, catalyzes the formation of N(7)-methylguanine at position 46 (m7G46) in tRNA. This is tRNA (guanine-N(7)-)-methyltransferase from Brugia malayi (Filarial nematode worm).